We begin with the raw amino-acid sequence, 466 residues long: MIPVTSFSGKTVAVFGLGGSGLASCHALKAGGAEVIAGDDNADNLAKAAQAGFITADLRTVVWANLAALVLAPGVPLTHPSPHWSVLAARQAGVEVIGDVELFCRERARHAPDAPFIAITGTNGKSTTTALVAHLMREAGYDVQMGGNIGTAILSLEPPRRGRVHVIEMSSYQIDLAPSLDPTVGILLNLSPDHLDRHGTIEHYAQVKERLIAGVQPQGTAVVGVDDHWCAAIADRQEQAGRSVVRVSVKRPLAHGVSVEQDRIVLVSGGARSEIADIGGIGSLRGRHNAQNAACASAGALALGVSRDILQQDLRSFPGLAHRMEQVGRKAHVLFVNDSKGTNADATEKALSSFDEIFWIAGGKPKSGGIASLDAFFPRIRKAYLIGEAAQEFAATLEGKVAYEISGTLEAAVPAAARDAEGAGRAGAVVLLSPACASFDQFRNFEVRGDRFRELVQALPGVTPVV.

121-127 provides a ligand contact to ATP; it reads GTNGKST.

This sequence belongs to the MurCDEF family.

The protein resides in the cytoplasm. It carries out the reaction UDP-N-acetyl-alpha-D-muramoyl-L-alanine + D-glutamate + ATP = UDP-N-acetyl-alpha-D-muramoyl-L-alanyl-D-glutamate + ADP + phosphate + H(+). It participates in cell wall biogenesis; peptidoglycan biosynthesis. Its function is as follows. Cell wall formation. Catalyzes the addition of glutamate to the nucleotide precursor UDP-N-acetylmuramoyl-L-alanine (UMA). The sequence is that of UDP-N-acetylmuramoylalanine--D-glutamate ligase from Nitrobacter winogradskyi (strain ATCC 25391 / DSM 10237 / CIP 104748 / NCIMB 11846 / Nb-255).